The chain runs to 316 residues: Protein C4 (316 aa).

Belongs to the poxviridae OPG031 protein family.

The protein localises to the host cytoplasm. Its subcellular location is the host nucleus. Its function is as follows. Plays a role in the inhibition of host NF-kappa-B activation. Mechanistically, blocks the subunit p65/RELA translocation into the host nucleus. The protein is Protein C4 (OPG031) of Homo sapiens (Human).